The chain runs to 496 residues: Fibronectin type III and SPRY domain-containing protein 1 (496 aa).

The stretch at 4 to 99 forms a coiled coil; that stretch reads QKEALRKIIT…ALESSEELLE (96 aa). Positions 105–162 constitute a COS domain; that stretch reads LLATDSKDFPQAAKQIKDGVTMAPAFRLSLKAKVSDNMSHLMVDFAQERRMLQALTFL. Residues 164–268 form the Fibronectin type-III domain; it reads VPSAPVIDLT…EPVTLETPAF (105 aa). A B30.2/SPRY domain is found at 268 to 477; sequence FMFRLDASTS…VTTGLQVPSS (210 aa). Positions 301 to 336 are disordered; the sequence is KAREKDGKGRTASPVNSPARGTPSPKRMPSGRGGRD. 2 positions are modified to omega-N-methylarginine: R310 and R320.

Oligomerization is required for binding to microtubules.

The protein localises to the cytoplasm. Its subcellular location is the cytoskeleton. It is found in the microtubule organizing center. The protein resides in the centrosome. It localises to the nucleus. The protein localises to the cleavage furrow. In terms of biological role, may be involved in microtubule organization and stabilization. The sequence is that of Fibronectin type III and SPRY domain-containing protein 1 (FSD1) from Bos taurus (Bovine).